The chain runs to 354 residues: Selection and upkeep of intraepithelial T-cells protein 1 (354 aa).

Positions 23 to 141 (PSSEQFTVNS…EEAIAEVKVT (119 aa)) constitute an Ig-like V-type 1 domain. Disulfide bonds link Cys49/Cys123 and Cys163/Cys217. The Ig-like C1-type 2 domain occupies 161–233 (VECNSEGWFP…TGQEERTSIV (73 aa)). 3 helical membrane passes run 243–263 (SVWI…IMMP), 283–303 (LIGI…TITL), and 326–346 (MTVM…LVYF).

The protein belongs to the SKINT family. Expressed in the thymus and skin.

It localises to the membrane. Functionally, may act by engaging a cell surface molecule on immature T-cells in the embryonic thymus. The protein is Selection and upkeep of intraepithelial T-cells protein 1 (SKINT1) of Macaca fascicularis (Crab-eating macaque).